Reading from the N-terminus, the 426-residue chain is Glutamate-1-semialdehyde 2,1-aminomutase (426 aa).

K268 carries the N6-(pyridoxal phosphate)lysine modification.

It belongs to the class-III pyridoxal-phosphate-dependent aminotransferase family. HemL subfamily. The cofactor is pyridoxal 5'-phosphate.

Its subcellular location is the cytoplasm. It catalyses the reaction (S)-4-amino-5-oxopentanoate = 5-aminolevulinate. The protein operates within porphyrin-containing compound metabolism; protoporphyrin-IX biosynthesis; 5-aminolevulinate from L-glutamyl-tRNA(Glu): step 2/2. This Saccharolobus islandicus (strain M.16.27) (Sulfolobus islandicus) protein is Glutamate-1-semialdehyde 2,1-aminomutase.